The following is a 350-amino-acid chain: Anthranilate phosphoribosyltransferase (350 aa).

Residues Gly-94, 97–98 (GD), Thr-102, 104–107 (NIST), 122–130 (KHGNRAVSS), and Ser-134 contribute to the 5-phospho-alpha-D-ribose 1-diphosphate site. Gly-94 lines the anthranilate pocket. Position 106 (Ser-106) interacts with Mg(2+). Asn-125 contacts anthranilate. Arg-180 contacts anthranilate. Positions 239 and 240 each coordinate Mg(2+).

It belongs to the anthranilate phosphoribosyltransferase family. Homodimer. Mg(2+) serves as cofactor.

It carries out the reaction N-(5-phospho-beta-D-ribosyl)anthranilate + diphosphate = 5-phospho-alpha-D-ribose 1-diphosphate + anthranilate. It participates in amino-acid biosynthesis; L-tryptophan biosynthesis; L-tryptophan from chorismate: step 2/5. Functionally, catalyzes the transfer of the phosphoribosyl group of 5-phosphorylribose-1-pyrophosphate (PRPP) to anthranilate to yield N-(5'-phosphoribosyl)-anthranilate (PRA). This Geobacter sulfurreducens (strain ATCC 51573 / DSM 12127 / PCA) protein is Anthranilate phosphoribosyltransferase.